We begin with the raw amino-acid sequence, 130 residues long: Small ribosomal subunit protein uS11 (130 aa).

The protein belongs to the universal ribosomal protein uS11 family. In terms of assembly, part of the 30S ribosomal subunit. Interacts with proteins S7 and S18. Binds to IF-3.

In terms of biological role, located on the platform of the 30S subunit, it bridges several disparate RNA helices of the 16S rRNA. Forms part of the Shine-Dalgarno cleft in the 70S ribosome. The polypeptide is Small ribosomal subunit protein uS11 (Aliarcobacter butzleri (strain RM4018) (Arcobacter butzleri)).